A 252-amino-acid chain; its full sequence is Methylthioribulose-1-phosphate dehydratase (252 aa).

C105 provides a ligand contact to substrate. H123 and H125 together coordinate Zn(2+). E151 serves as the catalytic Proton donor/acceptor. Zn(2+) is bound at residue H208.

This sequence belongs to the aldolase class II family. MtnB subfamily. The cofactor is Zn(2+).

It is found in the cytoplasm. The enzyme catalyses 5-(methylsulfanyl)-D-ribulose 1-phosphate = 5-methylsulfanyl-2,3-dioxopentyl phosphate + H2O. It functions in the pathway amino-acid biosynthesis; L-methionine biosynthesis via salvage pathway; L-methionine from S-methyl-5-thio-alpha-D-ribose 1-phosphate: step 2/6. Its function is as follows. Catalyzes the dehydration of methylthioribulose-1-phosphate (MTRu-1-P) into 2,3-diketo-5-methylthiopentyl-1-phosphate (DK-MTP-1-P). This chain is Methylthioribulose-1-phosphate dehydratase, found in Sclerotinia sclerotiorum (strain ATCC 18683 / 1980 / Ss-1) (White mold).